Reading from the N-terminus, the 311-residue chain is Pyrimidine-specific ribonucleoside hydrolase RihA (311 aa).

The active site involves H240.

Belongs to the IUNH family. RihA subfamily.

Functionally, hydrolyzes cytidine or uridine to ribose and cytosine or uracil, respectively. The sequence is that of Pyrimidine-specific ribonucleoside hydrolase RihA from Salmonella newport (strain SL254).